The following is a 671-amino-acid chain: Copper amine oxidase 1 (671 aa).

The N2 stretch occupies residues 3 to 106 (PHPLAILSEE…QHRVVGKEHH (104 aa)). The tract at residues 107 to 211 (ASLTLSEFDT…DRPATGGKGE (105 aa)) is N3. 319 to 330 (AFDFGDGGGGNM) is a binding site for substrate. The active-site Proton acceptor is Asp-321. Cys-340 and Cys-366 are oxidised to a cystine. A substrate-binding site is contributed by 402 to 407 (LANYEY). Residue Tyr-405 is the Schiff-base intermediate with substrate; via topaquinone of the active site. At Tyr-405 the chain carries 2',4',5'-topaquinone. The Cu cation site is built by His-455 and His-457. Residue Asp-464 coordinates Mn(2+). A glycan (N-linked (GlcNAc...) asparagine) is linked at Asn-471. Asp-606 serves as a coordination point for Mn(2+). His-617 contributes to the Cu cation binding site.

The protein belongs to the copper/topaquinone oxidase family. Homodimer. Requires Cu cation as cofactor. Zn(2+) serves as cofactor. It depends on L-topaquinone as a cofactor. Mn(2+) is required as a cofactor. In terms of processing, topaquinone (TPQ) is generated by copper-dependent autoxidation of a specific tyrosyl residue.

It carries out the reaction histamine + O2 + H2O = imidazole-4-acetaldehyde + H2O2 + NH4(+). This chain is Copper amine oxidase 1 (AO-I), found in Aspergillus niger.